Reading from the N-terminus, the 237-residue chain is Ribonuclease 3 (237 aa).

The 128-residue stretch at 6 to 133 (LIEVEKLIGI…VIAAVYLDKG (128 aa)) folds into the RNase III domain. Residue E46 coordinates Mg(2+). D50 is an active-site residue. Residues D119 and E122 each coordinate Mg(2+). The active site involves E122. Positions 160–229 (DFKTRLQEVL…AKAALQRLGE (70 aa)) constitute a DRBM domain.

This sequence belongs to the ribonuclease III family. Homodimer. Mg(2+) is required as a cofactor.

The protein localises to the cytoplasm. It catalyses the reaction Endonucleolytic cleavage to 5'-phosphomonoester.. In terms of biological role, digests double-stranded RNA. Involved in the processing of primary rRNA transcript to yield the immediate precursors to the large and small rRNAs (23S and 16S). Processes some mRNAs, and tRNAs when they are encoded in the rRNA operon. Processes pre-crRNA and tracrRNA of type II CRISPR loci if present in the organism. This is Ribonuclease 3 from Clostridium perfringens (strain 13 / Type A).